Here is a 446-residue protein sequence, read N- to C-terminus: Glucosylglycerate hydrolase (446 aa).

Residues Tyr36, 40-43 (WSWD), Tyr88, Gln115, and Gly180 each bind substrate. The Proton donor role is filled by Asp182. Residues Arg216 and 375–376 (YW) contribute to the substrate site. Catalysis depends on Glu419, which acts as the Proton acceptor. A substrate-binding site is contributed by Gln434.

This sequence belongs to the glycosyl hydrolase 63 family. In terms of assembly, homotetramer. Dimer of dimers.

It catalyses the reaction (2R)-2-O-(alpha-D-glucopyranosyl)-glycerate + H2O = (R)-glycerate + D-glucose. Activity is not dependent on divalent cations, but it is enhanced by Mg(2+). Functionally, catalyzes the hydrolysis of glucosylglycerate (GG) to glycerate and glucose. Involved in recovery from nitrogen starvation by promoting the rapid mobilization of the glucosylglycerate that accumulates under these conditions. Can also hydrolyze mannosylglycerate (MG), with tenfold lower efficiency. This chain is Glucosylglycerate hydrolase, found in Mycolicibacterium hassiacum (strain DSM 44199 / CIP 105218 / JCM 12690 / 3849) (Mycobacterium hassiacum).